A 670-amino-acid polypeptide reads, in one-letter code: MSRFDYRNTSKNTSVVDPDHSSPIINYRKDAKKGIKFTFMVVGESGTGKTTFINSLLNKKVLNHRYEKLSPTVGDTKTLMFTSAKSVALPNTSILTKNEFNPRTINEEPGIALTETHIEIIDDDNQKLLLNIIDTPGFGENLNNELCFIEIENYLKQQFDLVLAEETRIKRNPRFVDTRVHVMLYFITPTGHGLREIDIQCMKRLSKYVNIIPVIGKADSFTLNELQHFKQQIRIDIQKFNVPTFQFDNSLNDYDEDEDYDLIQECKFLTNLQPFAVVTSEDVFEVRESTTSTKGNNDKPKIIRARKYPWGLVDINDTRYSDFPILKSVLLGSHLQDLKDLTHDFLYETYRTERLTKVTGNGQAFDDEENEDAEFHDTVEHQLNDSNRGVGGDDNNNNNNNNNNASTIPSMSNLAQLTTSTNEHDASHIDNNSITSTSSSIKKSTSMLIDDHPSSSPKLKNISSFTSSTSTVSLEGGEKEGGHHDRGANSTSTNNNNNNNAFKRLSIGPQRNQLRQISETVPYVLRHERILERQQKLEEMEQASARELANRAALLEKKAAQLKAKEKALRQLELNRQKQEESATSSLHRKDSDISGSVQSGGVDDGKSESTNNNNNNRNGYGYGHGHGHGQSHEYDNSEYHHDDSTPNYETSRLQKDETLTDLHSIVSNH.

Positions 33–357 (KGIKFTFMVV…ETYRTERLTK (325 aa)) constitute a Septin-type G domain. The tract at residues 43–50 (GESGTGKT) is G1 motif. GTP contacts are provided by residues 43-50 (GESGTGKT), glycine 137, 217-225 (KADSFTLNE), and arginine 306. The interval 134–137 (DTPG) is G3 motif. Residues 216–219 (GKAD) are G4 motif. Disordered stretches follow at residues 383 to 513 (LNDS…QRNQ) and 574 to 670 (LNRQ…VSNH). Positions 395-404 (NNNNNNNNNN) are enriched in low complexity. The segment covering 405–421 (ASTIPSMSNLAQLTTST) has biased composition (polar residues). 2 stretches are compositionally biased toward low complexity: residues 433–446 (SITS…KSTS) and 463–473 (SSFTSSTSTVS). The stretch at 472–606 (VSLEGGEKEG…SVQSGGVDDG (135 aa)) forms a coiled coil. The span at 476–487 (GGEKEGGHHDRG) shows a compositional bias: basic and acidic residues. The segment covering 489–500 (NSTSTNNNNNNN) has biased composition (low complexity). Residues 631 to 645 (QSHEYDNSEYHHDDS) show a composition bias toward basic and acidic residues.

It belongs to the TRAFAC class TrmE-Era-EngA-EngB-Septin-like GTPase superfamily. Septin GTPase family. As to quaternary structure, component of the septin complex which consists of CDC3, CDC10, CDC11, CDC12 and probably SEP7. The purified septin complex appeared to have a stoichiometry of 2 CDC3, 1 to 2 CDC10, 1 CDC11, 2 CDC12, and 1 or none SEP7 subunit. Induction of hyphal growth brings about important modifications in septin ring dynamics, because the rings were found in a different state from those of yeast cells. This hyphal-specific state contains a core of stable septins (SEP7, CDC3, and CDC12), and it shows a high CDC10 turnover between the ring and the cytoplasm. Interacts with GIN4. In terms of processing, phosphorylated by GIN4 which stabilizes the GIN4-SEP7 interaction.

The protein localises to the bud neck. Functionally, septins are GTPases involved in cytokinesis that assemble early in the cell cycle as a patch at the incipient bud site and form a ring before bud emergence, which transforms into an hour-glass shaped collar of cortical filaments that spans both sides of the mother-bud neck. This collar persists until just before cytokinesis, when it splits into two rings that occupy opposite sides of the neck. The septins at the bud neck serve as a structural scaffold that recruits different components involved in diverse processes at specific stages during the cell cycle. Many proteins bind asymmetrically to the septin collar. The septin assembly is regulated by protein kinase GIN4. Septins are also involved in cell morphogenesis, chlamydospores morphogenesis, bud site selection, chitin deposition, cell cycle regulation, cell compartmentalization and spore wall formation. SEP7 is required to convert hyphal septin rings into the hyphal-specific state and is necessary for CDC10 turnover during hyphal growth. The protein is Septation protein 7 (SEP7) of Candida albicans (strain SC5314 / ATCC MYA-2876) (Yeast).